Here is a 626-residue protein sequence, read N- to C-terminus: tRNA uridine 5-carboxymethylaminomethyl modification enzyme MnmG (626 aa).

Residue 14 to 19 (GAGHAG) participates in FAD binding. An NAD(+)-binding site is contributed by 273–287 (GPRYCPSIEDKVVRF).

This sequence belongs to the MnmG family. Homodimer. Heterotetramer of two MnmE and two MnmG subunits. The cofactor is FAD.

The protein localises to the cytoplasm. Functionally, NAD-binding protein involved in the addition of a carboxymethylaminomethyl (cmnm) group at the wobble position (U34) of certain tRNAs, forming tRNA-cmnm(5)s(2)U34. This Caldicellulosiruptor saccharolyticus (strain ATCC 43494 / DSM 8903 / Tp8T 6331) protein is tRNA uridine 5-carboxymethylaminomethyl modification enzyme MnmG.